Reading from the N-terminus, the 182-residue chain is NADH-quinone oxidoreductase subunit I (182 aa).

4Fe-4S ferredoxin-type domains follow at residues 52–82 (LTRDPDGEERCVACNLCAVACPVGCISLQKA) and 92–121 (DFFRINFSRCIFCGLCEEACPTTAIQLTPD). [4Fe-4S] cluster contacts are provided by Cys-62, Cys-65, Cys-68, Cys-72, Cys-101, Cys-104, Cys-107, and Cys-111.

It belongs to the complex I 23 kDa subunit family. In terms of assembly, NDH-1 is composed of 13 different subunits. Subunits NuoA, H, J, K, L, M, N constitute the membrane sector of the complex. Requires [4Fe-4S] cluster as cofactor.

It localises to the cell inner membrane. The enzyme catalyses a quinone + NADH + 5 H(+)(in) = a quinol + NAD(+) + 4 H(+)(out). Its function is as follows. NDH-1 shuttles electrons from NADH, via FMN and iron-sulfur (Fe-S) centers, to quinones in the respiratory chain. The immediate electron acceptor for the enzyme in this species is believed to be ubiquinone. Couples the redox reaction to proton translocation (for every two electrons transferred, four hydrogen ions are translocated across the cytoplasmic membrane), and thus conserves the redox energy in a proton gradient. Required for plants roots colonization. The protein is NADH-quinone oxidoreductase subunit I (nuoI) of Pseudomonas fluorescens.